The primary structure comprises 155 residues: 6,7-dimethyl-8-ribityllumazine synthase (155 aa).

5-amino-6-(D-ribitylamino)uracil contacts are provided by residues Phe-23, 57–59 (AFE), and 81–83 (AVI). 86 to 87 (ST) lines the (2S)-2-hydroxy-3-oxobutyl phosphate pocket. His-89 acts as the Proton donor in catalysis. Phe-114 is a binding site for 5-amino-6-(D-ribitylamino)uracil. Arg-128 is a binding site for (2S)-2-hydroxy-3-oxobutyl phosphate.

Belongs to the DMRL synthase family.

It catalyses the reaction (2S)-2-hydroxy-3-oxobutyl phosphate + 5-amino-6-(D-ribitylamino)uracil = 6,7-dimethyl-8-(1-D-ribityl)lumazine + phosphate + 2 H2O + H(+). The protein operates within cofactor biosynthesis; riboflavin biosynthesis; riboflavin from 2-hydroxy-3-oxobutyl phosphate and 5-amino-6-(D-ribitylamino)uracil: step 1/2. Functionally, catalyzes the formation of 6,7-dimethyl-8-ribityllumazine by condensation of 5-amino-6-(D-ribitylamino)uracil with 3,4-dihydroxy-2-butanone 4-phosphate. This is the penultimate step in the biosynthesis of riboflavin. This Geobacter sulfurreducens (strain ATCC 51573 / DSM 12127 / PCA) protein is 6,7-dimethyl-8-ribityllumazine synthase.